The sequence spans 317 residues: Ribosomal protein L11 methyltransferase (317 aa).

S-adenosyl-L-methionine contacts are provided by T158, G179, D201, and N244.

It belongs to the methyltransferase superfamily. PrmA family.

The protein resides in the cytoplasm. It catalyses the reaction L-lysyl-[protein] + 3 S-adenosyl-L-methionine = N(6),N(6),N(6)-trimethyl-L-lysyl-[protein] + 3 S-adenosyl-L-homocysteine + 3 H(+). In terms of biological role, methylates ribosomal protein L11. The sequence is that of Ribosomal protein L11 methyltransferase from Streptococcus equi subsp. zooepidemicus (strain H70).